We begin with the raw amino-acid sequence, 123 residues long: WAP four-disulfide core domain protein 5 (123 aa).

An N-terminal signal peptide occupies residues 1–24; sequence MRTQSLLLLGALLAVGSQLPAVFG. 2 consecutive WAP domains span residues 27–74 and 75–121; these read KGEK…VPRV and SVKL…RDPA. Cystine bridges form between cysteine 34–cysteine 62, cysteine 41–cysteine 66, cysteine 49–cysteine 61, cysteine 55–cysteine 70, cysteine 81–cysteine 109, cysteine 88–cysteine 113, cysteine 96–cysteine 108, and cysteine 102–cysteine 117.

It localises to the secreted. Putative acid-stable proteinase inhibitor. The polypeptide is WAP four-disulfide core domain protein 5 (WFDC5) (Gorilla gorilla gorilla (Western lowland gorilla)).